Consider the following 34-residue polypeptide: Sperm protein EM1 (34 aa).

Positions 1–17 are enriched in basic residues; the sequence is AGSKSRSRSRSRSRSKS. Residues 1–34 form a disordered region; sequence AGSKSRSRSRSRSRSKSPAKSASPKSAASPRASR. Repeat copies occupy residues 3-4, 5-6, 7-8, 9-10, 11-12, 13-14, and 15-16. Residues 3-16 form a 7 X 2 AA tandem repeats of S-[KR] region; sequence SKSRSRSRSRSRSK. A compositionally biased stretch (low complexity) spans 18 to 34; sequence PAKSASPKSAASPRASR.

As to expression, sperm.

The protein localises to the nucleus. The polypeptide is Sperm protein EM1 (Ensis minor (Razor shell)).